The chain runs to 229 residues: ATP synthase subunit a (229 aa).

6 consecutive transmembrane segments (helical) span residues 14–34 (LIAI…ALIL), 68–88 (YFPF…LGLF), 98–118 (IVVT…GGLW), 124–144 (FLSI…LVLI), 157–179 (GVRL…GFGF), and 189–209 (NIFP…VAVI).

The protein belongs to the ATPase A chain family. In terms of assembly, F-type ATPases have 2 components, CF(1) - the catalytic core - and CF(0) - the membrane proton channel. CF(1) has five subunits: alpha(3), beta(3), gamma(1), delta(1), epsilon(1). CF(0) has three main subunits: a, b and c.

The protein localises to the mitochondrion inner membrane. Its function is as follows. Mitochondrial membrane ATP synthase (F(1)F(0) ATP synthase or Complex V) produces ATP from ADP in the presence of a proton gradient across the membrane which is generated by electron transport complexes of the respiratory chain. F-type ATPases consist of two structural domains, F(1) - containing the extramembraneous catalytic core and F(0) - containing the membrane proton channel, linked together by a central stalk and a peripheral stalk. During catalysis, ATP synthesis in the catalytic domain of F(1) is coupled via a rotary mechanism of the central stalk subunits to proton translocation. Key component of the proton channel; it may play a direct role in the translocation of protons across the membrane. This Metridium senile (Brown sea anemone) protein is ATP synthase subunit a (ATPASE6).